Consider the following 120-residue polypeptide: Chaperonin GroEL (120 aa).

23–27 contributes to the ATP binding site; that stretch reads DGTTT.

Belongs to the chaperonin (HSP60) family. In terms of assembly, forms a cylinder of 14 subunits composed of two heptameric rings stacked back-to-back. Interacts with the co-chaperonin GroES.

The protein resides in the cytoplasm. It carries out the reaction ATP + H2O + a folded polypeptide = ADP + phosphate + an unfolded polypeptide.. Functionally, together with its co-chaperonin GroES, plays an essential role in assisting protein folding. The GroEL-GroES system forms a nano-cage that allows encapsulation of the non-native substrate proteins and provides a physical environment optimized to promote and accelerate protein folding. In Mycobacterium shimoidei, this protein is Chaperonin GroEL.